A 75-amino-acid chain; its full sequence is U6-lycotoxin-Ls1h (75 aa).

Positions 1 to 21 are cleaved as a signal peptide; it reads MKLLLFTALVLVVISLIEVEA. Positions 22 to 25 are excised as a propeptide; it reads ENER.

It belongs to the neurotoxin 19 (CSTX) family. 06 (U6-Lctx) subfamily. Contains 4 disulfide bonds. As to expression, expressed by the venom gland.

It is found in the secreted. The protein is U6-lycotoxin-Ls1h of Lycosa singoriensis (Wolf spider).